The following is a 339-amino-acid chain: Dihydroorotate dehydrogenase (quinone) (339 aa).

Residues 62 to 66 and threonine 86 contribute to the FMN site; that span reads AGMDK. Residue lysine 66 participates in substrate binding. Substrate is bound at residue 111 to 115; sequence NRMGF. FMN is bound by residues asparagine 139 and asparagine 172. Asparagine 172 provides a ligand contact to substrate. The active-site Nucleophile is serine 175. Asparagine 177 lines the substrate pocket. FMN-binding residues include lysine 217 and threonine 245. 246–247 lines the substrate pocket; it reads NT. FMN-binding positions include glycine 268, glycine 297, and 318-319; that span reads YS.

It belongs to the dihydroorotate dehydrogenase family. Type 2 subfamily. As to quaternary structure, monomer. FMN is required as a cofactor.

It is found in the cell membrane. The catalysed reaction is (S)-dihydroorotate + a quinone = orotate + a quinol. It functions in the pathway pyrimidine metabolism; UMP biosynthesis via de novo pathway; orotate from (S)-dihydroorotate (quinone route): step 1/1. Functionally, catalyzes the conversion of dihydroorotate to orotate with quinone as electron acceptor. This is Dihydroorotate dehydrogenase (quinone) from Shewanella baltica (strain OS155 / ATCC BAA-1091).